Consider the following 311-residue polypeptide: Methionyl-tRNA formyltransferase (311 aa).

Residue 112 to 115 (SLLP) coordinates (6S)-5,6,7,8-tetrahydrofolate.

It belongs to the Fmt family.

The enzyme catalyses L-methionyl-tRNA(fMet) + (6R)-10-formyltetrahydrofolate = N-formyl-L-methionyl-tRNA(fMet) + (6S)-5,6,7,8-tetrahydrofolate + H(+). Functionally, attaches a formyl group to the free amino group of methionyl-tRNA(fMet). The formyl group appears to play a dual role in the initiator identity of N-formylmethionyl-tRNA by promoting its recognition by IF2 and preventing the misappropriation of this tRNA by the elongation apparatus. The protein is Methionyl-tRNA formyltransferase of Rhizobium leguminosarum bv. trifolii (strain WSM2304).